The chain runs to 186 residues: Phosphoheptose isomerase (186 aa).

Positions 33–186 constitute an SIS domain; the sequence is LCECLKKGGK…TLCQIIDEGF (154 aa). 48-50 contacts substrate; that stretch reads NGG. His-57 and Glu-61 together coordinate Zn(2+). Residues Glu-61, 90 to 91, 116 to 118, Ser-121, and Gln-168 each bind substrate; these read ND and STS. 2 residues coordinate Zn(2+): Gln-168 and His-176.

The protein belongs to the SIS family. GmhA subfamily. As to quaternary structure, homotetramer. It depends on Zn(2+) as a cofactor.

It is found in the cytoplasm. It catalyses the reaction 2 D-sedoheptulose 7-phosphate = D-glycero-alpha-D-manno-heptose 7-phosphate + D-glycero-beta-D-manno-heptose 7-phosphate. Its pathway is carbohydrate biosynthesis; D-glycero-D-manno-heptose 7-phosphate biosynthesis; D-glycero-alpha-D-manno-heptose 7-phosphate and D-glycero-beta-D-manno-heptose 7-phosphate from sedoheptulose 7-phosphate: step 1/1. Its function is as follows. Catalyzes the isomerization of sedoheptulose 7-phosphate in D-glycero-D-manno-heptose 7-phosphate. The chain is Phosphoheptose isomerase from Campylobacter jejuni subsp. jejuni serotype O:6 (strain 81116 / NCTC 11828).